Reading from the N-terminus, the 513-residue chain is ATP synthase subunit alpha (513 aa).

169-176 contributes to the ATP binding site; the sequence is GDRQTGKT.

The protein belongs to the ATPase alpha/beta chains family. F-type ATPases have 2 components, CF(1) - the catalytic core - and CF(0) - the membrane proton channel. CF(1) has five subunits: alpha(3), beta(3), gamma(1), delta(1), epsilon(1). CF(0) has three main subunits: a(1), b(2) and c(9-12). The alpha and beta chains form an alternating ring which encloses part of the gamma chain. CF(1) is attached to CF(0) by a central stalk formed by the gamma and epsilon chains, while a peripheral stalk is formed by the delta and b chains.

It localises to the cell inner membrane. The catalysed reaction is ATP + H2O + 4 H(+)(in) = ADP + phosphate + 5 H(+)(out). Its function is as follows. Produces ATP from ADP in the presence of a proton gradient across the membrane. The alpha chain is a regulatory subunit. This Yersinia enterocolitica serotype O:8 / biotype 1B (strain NCTC 13174 / 8081) protein is ATP synthase subunit alpha.